The chain runs to 474 residues: ATP synthase subunit beta (474 aa).

Residue 152-159 (GGAGVGKT) participates in ATP binding.

It belongs to the ATPase alpha/beta chains family. In terms of assembly, F-type ATPases have 2 components, CF(1) - the catalytic core - and CF(0) - the membrane proton channel. CF(1) has five subunits: alpha(3), beta(3), gamma(1), delta(1), epsilon(1). CF(0) has four main subunits: a(1), b(1), b'(1) and c(9-12).

The protein localises to the cell inner membrane. The enzyme catalyses ATP + H2O + 4 H(+)(in) = ADP + phosphate + 5 H(+)(out). In terms of biological role, produces ATP from ADP in the presence of a proton gradient across the membrane. The catalytic sites are hosted primarily by the beta subunits. This chain is ATP synthase subunit beta, found in Rhodospirillum rubrum (strain ATCC 11170 / ATH 1.1.1 / DSM 467 / LMG 4362 / NCIMB 8255 / S1).